The chain runs to 508 residues: NAD(P)H-quinone oxidoreductase subunit 2 B, chloroplastic (508 aa).

13 helical membrane passes run leucine 24 to leucine 44, tryptophan 59 to tryptophan 79, isoleucine 99 to isoleucine 119, methionine 124 to cysteine 144, phenylalanine 149 to tyrosine 169, leucine 184 to leucine 204, proline 227 to alanine 247, tryptophan 295 to isoleucine 315, methionine 323 to aspartate 343, tyrosine 354 to leucine 374, alanine 395 to phenylalanine 415, leucine 418 to leucine 438, and methionine 482 to isoleucine 502.

Belongs to the complex I subunit 2 family. NDH is composed of at least 16 different subunits, 5 of which are encoded in the nucleus.

The protein resides in the plastid. It is found in the chloroplast thylakoid membrane. It catalyses the reaction a plastoquinone + NADH + (n+1) H(+)(in) = a plastoquinol + NAD(+) + n H(+)(out). It carries out the reaction a plastoquinone + NADPH + (n+1) H(+)(in) = a plastoquinol + NADP(+) + n H(+)(out). NDH shuttles electrons from NAD(P)H:plastoquinone, via FMN and iron-sulfur (Fe-S) centers, to quinones in the photosynthetic chain and possibly in a chloroplast respiratory chain. The immediate electron acceptor for the enzyme in this species is believed to be plastoquinone. Couples the redox reaction to proton translocation, and thus conserves the redox energy in a proton gradient. This is NAD(P)H-quinone oxidoreductase subunit 2 B, chloroplastic from Ipomoea purpurea (Common morning glory).